Here is an 874-residue protein sequence, read N- to C-terminus: Alanine--tRNA ligase (874 aa).

Positions 563, 567, 665, and 669 each coordinate Zn(2+).

It belongs to the class-II aminoacyl-tRNA synthetase family. Zn(2+) serves as cofactor.

The protein resides in the cytoplasm. It catalyses the reaction tRNA(Ala) + L-alanine + ATP = L-alanyl-tRNA(Ala) + AMP + diphosphate. Catalyzes the attachment of alanine to tRNA(Ala) in a two-step reaction: alanine is first activated by ATP to form Ala-AMP and then transferred to the acceptor end of tRNA(Ala). Also edits incorrectly charged Ser-tRNA(Ala) and Gly-tRNA(Ala) via its editing domain. The chain is Alanine--tRNA ligase from Histophilus somni (strain 129Pt) (Haemophilus somnus).